Here is a 237-residue protein sequence, read N- to C-terminus: DEAIHCPPCSEEKLARCRPPVGCEELVREPGCGCCATCALGKGMPCGVYTPDCGSGLRCHPPRGVEKPLHTLVHGQGVCMELAEIEAIQESLQPSDKDEGDHPNNSFSPCSAHDRKCLQKHLAKIRDRSTSGGKMKVIGAPREEVRPVPQGSCQSELHRALERLAASQSRTHEDLYIIPIPNCDRNGNFHPKQCHPALDGQRGKCWCVDRKTGVKLPGGLEPKGELDCHQLADSFRE.

Residues 2-82 (EAIHCPPCSE…VHGQGVCMEL (81 aa)) enclose the IGFBP N-terminal domain. Intrachain disulfides connect C6–C32, C9–C34, C17–C35, C23–C38, C46–C59, and C53–C79. A glycan (N-linked (GlcNAc...) asparagine) is linked at N104. 4 disulfides stabilise this stretch: C110–C117, C153–C183, C194–C205, and C207–C228. Residues 150-228 (QGSCQSELHR…GLEPKGELDC (79 aa)) enclose the Thyroglobulin type-1 domain. A Phosphoserine modification is found at S234.

Binds IGF2 more than IGF1. There are two different molecular mass variants (29 kDa and 24 kDa forms). The 29 kDa form was shown to be N-glycosylated. Detected in adult ewe, liver &gt; kidney &gt; lung &gt;&gt; heart and also in several fetal tissues.

The protein resides in the secreted. In terms of biological role, IGF-binding proteins prolong the half-life of the IGFs and have been shown to either inhibit or stimulate the growth promoting effects of the IGFs on cell culture. They alter the interaction of IGFs with their cell surface receptors. The chain is Insulin-like growth factor-binding protein 4 (IGFBP4) from Ovis aries (Sheep).